A 176-amino-acid polypeptide reads, in one-letter code: Inner membrane-spanning protein YciB (176 aa).

Transmembrane regions (helical) follow at residues 3 to 23 (FLFD…WGIF), 49 to 69 (TMLW…LVLH), 72 to 92 (KFIQ…LVAA), 118 to 138 (KLNL…LYVV), and 149 to 169 (FKLF…SLWL).

Belongs to the YciB family.

It is found in the cell inner membrane. Functionally, plays a role in cell envelope biogenesis, maintenance of cell envelope integrity and membrane homeostasis. The protein is Inner membrane-spanning protein YciB of Burkholderia thailandensis (strain ATCC 700388 / DSM 13276 / CCUG 48851 / CIP 106301 / E264).